The primary structure comprises 795 residues: Phenylalanine--tRNA ligase beta subunit (795 aa).

The tRNA-binding domain occupies 39-148 (AGEFNGVVVG…ADAPIGVDVR (110 aa)). In terms of domain architecture, B5 spans 401-476 (PKQATITLRR…RIYGYNNIPD (76 aa)). Mg(2+) contacts are provided by D454, D460, E463, and E464. Residues 701–794 (SRFPANRRDI…LKQRFQASLR (94 aa)) enclose the FDX-ACB domain.

The protein belongs to the phenylalanyl-tRNA synthetase beta subunit family. Type 1 subfamily. As to quaternary structure, tetramer of two alpha and two beta subunits. The cofactor is Mg(2+).

Its subcellular location is the cytoplasm. It carries out the reaction tRNA(Phe) + L-phenylalanine + ATP = L-phenylalanyl-tRNA(Phe) + AMP + diphosphate + H(+). The polypeptide is Phenylalanine--tRNA ligase beta subunit (Yersinia pestis).